Reading from the N-terminus, the 614-residue chain is Probable indole-3-acetic acid-amido synthetase GH3.2 (614 aa).

Belongs to the IAA-amido conjugating enzyme family. As to expression, expressed in roots, flowers and callus.

Functionally, may catalyze the synthesis of indole-3-acetic acid (IAA)-amino acid conjugates, providing a mechanism for the plant to cope with the presence of excess auxin. This Oryza sativa subsp. japonica (Rice) protein is Probable indole-3-acetic acid-amido synthetase GH3.2 (GH3.2).